A 140-amino-acid chain; its full sequence is MALERTFSIIKPDATRRNLTGKINAKFEEAGLRIVAQKRIHMTKEQAGVFYGVHAERPFYDELCEFMSSAPVVVQVLEGENAIAKNREVMGATNPADAAPGTIRAEFAESVGENSVHGSDAPETAAVEIAYFFSGIELVG.

ATP contacts are provided by Lys-11, Phe-59, Arg-87, Thr-93, Arg-104, and Asn-114. The active-site Pros-phosphohistidine intermediate is the His-117.

The protein belongs to the NDK family. As to quaternary structure, homotetramer. Requires Mg(2+) as cofactor.

Its subcellular location is the cytoplasm. It carries out the reaction a 2'-deoxyribonucleoside 5'-diphosphate + ATP = a 2'-deoxyribonucleoside 5'-triphosphate + ADP. The enzyme catalyses a ribonucleoside 5'-diphosphate + ATP = a ribonucleoside 5'-triphosphate + ADP. Functionally, major role in the synthesis of nucleoside triphosphates other than ATP. The ATP gamma phosphate is transferred to the NDP beta phosphate via a ping-pong mechanism, using a phosphorylated active-site intermediate. In Ruegeria pomeroyi (strain ATCC 700808 / DSM 15171 / DSS-3) (Silicibacter pomeroyi), this protein is Nucleoside diphosphate kinase.